A 399-amino-acid chain; its full sequence is Succinate--CoA ligase [ADP-forming] subunit beta (399 aa).

Residues 9-254 (KALLREFGVP…ESEEDAKEIE (246 aa)) form the ATP-grasp domain. ATP contacts are provided by residues Lys-46, 53–55 (GRG), Glu-109, Ser-112, and Glu-117. Mg(2+)-binding residues include Asn-209 and Asp-223. Residues Asn-274 and 331 to 333 (GIM) contribute to the substrate site.

It belongs to the succinate/malate CoA ligase beta subunit family. As to quaternary structure, heterotetramer of two alpha and two beta subunits. It depends on Mg(2+) as a cofactor.

The enzyme catalyses succinate + ATP + CoA = succinyl-CoA + ADP + phosphate. It catalyses the reaction GTP + succinate + CoA = succinyl-CoA + GDP + phosphate. It participates in carbohydrate metabolism; tricarboxylic acid cycle; succinate from succinyl-CoA (ligase route): step 1/1. Succinyl-CoA synthetase functions in the citric acid cycle (TCA), coupling the hydrolysis of succinyl-CoA to the synthesis of either ATP or GTP and thus represents the only step of substrate-level phosphorylation in the TCA. The beta subunit provides nucleotide specificity of the enzyme and binds the substrate succinate, while the binding sites for coenzyme A and phosphate are found in the alpha subunit. This Nitrobacter winogradskyi (strain ATCC 25391 / DSM 10237 / CIP 104748 / NCIMB 11846 / Nb-255) protein is Succinate--CoA ligase [ADP-forming] subunit beta.